The following is a 734-amino-acid chain: Photosystem I P700 chlorophyll a apoprotein A2 (734 aa).

Helical transmembrane passes span 46 to 69, 135 to 158, 175 to 199, 273 to 291, 330 to 353, 369 to 395, 417 to 439, and 517 to 535; these read IFAS…FHVA, LYTG…LHLQ, LNHH…HVAI, IAHH…GHMY, IHFQ…QHMY, AALY…IFFI, AIIS…LYVH, and FLVH…LILV. [4Fe-4S] cluster-binding residues include cysteine 559 and cysteine 568. 2 helical membrane-spanning segments follow: residues 575 to 596 and 643 to 665; these read AFYL…YWHW and LSVW…MFLI. The chlorophyll a site is built by histidine 654, methionine 662, and tyrosine 670. Tryptophan 671 provides a ligand contact to phylloquinone. The helical transmembrane segment at 707–727 threads the bilayer; that stretch reads LVGLAHFSVGYIFTYAAFLIA.

The protein belongs to the PsaA/PsaB family. As to quaternary structure, the PsaA/B heterodimer binds the P700 chlorophyll special pair and subsequent electron acceptors. PSI consists of a core antenna complex that captures photons, and an electron transfer chain that converts photonic excitation into a charge separation. The eukaryotic PSI reaction center is composed of at least 11 subunits. P700 is a chlorophyll a/chlorophyll a' dimer, A0 is one or more chlorophyll a, A1 is one or both phylloquinones and FX is a shared 4Fe-4S iron-sulfur center. is required as a cofactor.

The protein localises to the plastid. It is found in the chloroplast thylakoid membrane. The catalysed reaction is reduced [plastocyanin] + hnu + oxidized [2Fe-2S]-[ferredoxin] = oxidized [plastocyanin] + reduced [2Fe-2S]-[ferredoxin]. PsaA and PsaB bind P700, the primary electron donor of photosystem I (PSI), as well as the electron acceptors A0, A1 and FX. PSI is a plastocyanin-ferredoxin oxidoreductase, converting photonic excitation into a charge separation, which transfers an electron from the donor P700 chlorophyll pair to the spectroscopically characterized acceptors A0, A1, FX, FA and FB in turn. Oxidized P700 is reduced on the lumenal side of the thylakoid membrane by plastocyanin. This is Photosystem I P700 chlorophyll a apoprotein A2 from Gossypium hirsutum (Upland cotton).